The chain runs to 687 residues: Polyphosphate kinase (687 aa).

Asn-45 contacts ATP. Positions 375 and 405 each coordinate Mg(2+). His-435 acts as the Phosphohistidine intermediate in catalysis. Residues Tyr-472, Arg-568, and His-596 each coordinate ATP.

Belongs to the polyphosphate kinase 1 (PPK1) family. Requires Mg(2+) as cofactor. An intermediate of this reaction is the autophosphorylated ppk in which a phosphate is covalently linked to a histidine residue through a N-P bond.

It carries out the reaction [phosphate](n) + ATP = [phosphate](n+1) + ADP. Its function is as follows. Catalyzes the reversible transfer of the terminal phosphate of ATP to form a long-chain polyphosphate (polyP). In Paraburkholderia phytofirmans (strain DSM 17436 / LMG 22146 / PsJN) (Burkholderia phytofirmans), this protein is Polyphosphate kinase.